We begin with the raw amino-acid sequence, 727 residues long: Cyclin-T1 (727 aa).

A Phosphoserine modification is found at serine 117. Residues 253 to 270 carry the Nuclear localization signal, and interaction with Tat-TAR RNA motif; that stretch reads KRIRNWRACQAAKKTKAD. Low complexity predominate over residues 302 to 322; sequence MSTSSTTSTVPSLPTTEESSS. The interval 302–326 is disordered; that stretch reads MSTSSTTSTVPSLPTTEESSSNLSG. Residue lysine 343 forms a Glycyl lysine isopeptide (Lys-Gly) (interchain with G-Cter in SUMO2) linkage. Residues 386–427 are a coiled coil; the sequence is SAKVSLKEYRAKHAEELAAQKRQLENMEANVKSQYAYAAQNL. Serine 390 is subject to Phosphoserine. Residue lysine 392 is modified to N6-acetyllysine. Lysine 417 participates in a covalent cross-link: Glycyl lysine isopeptide (Lys-Gly) (interchain with G-Cter in SUMO2). ADP-ribosylserine is present on residues serine 418, serine 476, and serine 477. The interval 482–552 is histidine-rich domain (HRD); sequence IKMRIKVHAA…RPGDPKHSSQ (71 aa). A Glycyl lysine isopeptide (Lys-Gly) (interchain with G-Cter in SUMO2) cross-link involves residue lysine 483. Basic and acidic residues predominate over residues 486–508; that stretch reads IKVHAAPDKHNSIDDSVTKSREH. 2 disordered regions span residues 486–591 and 692–727; these read IKVH…DHPA and LNPRAGGMPSRSGNTDKPRLPPLPSEPPPPLPPLPK. Lysine 487 bears the N6-(ADP-ribosyl)lysine mark. The residue at position 489 (histidine 489) is an ADP-ribosylhistidine. 2 positions are modified to phosphoserine: serine 497 and serine 501. Positions 509 to 532 are enriched in basic residues; the sequence is KEKHKTHPSNHHHHHNHHSHKHSH. At histidine 532 the chain carries ADP-ribosylhistidine. Residues serine 533, serine 551, and serine 554 each carry the ADP-ribosylserine modification. At histidine 558 the chain carries ADP-ribosylhistidine. A compositionally biased stretch (low complexity) spans 562–572; sequence SLSSSFSSSSS. Serine 565 is modified (ADP-ribosylserine). A Phosphoserine modification is found at serine 566. Residues 711 to 727 show a composition bias toward pro residues; that stretch reads LPPLPSEPPPPLPPLPK.

Belongs to the cyclin family. Cyclin C subfamily. As to quaternary structure, cyclin-T1 is the predominant cyclin that associates with CDK9 to form a heterodimer called P-TEFb. P-TEFb forms a complex with AFF4/AF5Q31. Component of a complex which is at least composed of HTATSF1/Tat-SF1, P-TEFb complex, RNA pol II, SUPT5H, and NCL/nucleolin. Component of the 7SK snRNP complex at least composed of P-TEFb (composed of CDK9 and CCNT1/cyclin-T1), HEXIM1, HEXIM2, BCDIN3, SART3 proteins and 7SK and U6 snRNAs. Interacts (via central region) with ZMYND8 (via N-terminus); the interaction is direct and the association appears to occur between homodimeric ZMYND8 and the activated form of the P-TEFb complex. Interacts with BRD4, targets chromatin binding. Interacts with JMJD6. Interacts with MDFIC. Interacts with HSF1. Interacts with HTATSF1. Interacts with TBX21. ADP-ribosylation on serine residues by PARP1 in response to DNA damage disrupts the phase separation activity of CCNT1, thereby preventing activation of CDK9.

It is found in the nucleus. Regulatory subunit of the cyclin-dependent kinase pair (CDK9/cyclin-T1) complex, also called positive transcription elongation factor B (P-TEFb), which facilitates the transition from abortive to productive elongation by phosphorylating the CTD (C-terminal domain) of the large subunit of RNA polymerase II (RNA Pol II). Required to activate the protein kinase activity of CDK9: acts by mediating formation of liquid-liquid phase separation (LLPS) that enhances binding of P-TEFb to the CTD of RNA Pol II. This is Cyclin-T1 (CCNT1) from Equus caballus (Horse).